Consider the following 193-residue polypeptide: Ion-translocating oxidoreductase complex subunit A (193 aa).

Transmembrane regions (helical) follow at residues 5–25 (ALLF…FLGL), 39–59 (IGMG…SWLV), 62–82 (FILV…LVLA), 102–122 (LLGI…VVLL), 134–154 (TIYG…FAAI), and 171–191 (SIAL…TGLV).

Belongs to the NqrDE/RnfAE family. As to quaternary structure, the complex is composed of six subunits: RnfA, RnfB, RnfC, RnfD, RnfE and RnfG.

It localises to the cell inner membrane. Functionally, part of a membrane-bound complex that couples electron transfer with translocation of ions across the membrane. This chain is Ion-translocating oxidoreductase complex subunit A, found in Pectobacterium carotovorum subsp. carotovorum (strain PC1).